The sequence spans 197 residues: Small ribosomal subunit protein uS10c (197 aa).

Residues 1 to 60 constitute a chloroplast transit peptide; that stretch reads MATSSLSTIVFSPLALSNSSSFPNKPQVSNLSLHSSLSNLRRTLSHSSPSSSSSSNVRVF. Positions 67–91 are disordered; it reads ESQETGPESYVEEGSETSALGIGAD.

It belongs to the universal ribosomal protein uS10 family. As to quaternary structure, part of the 30S ribosomal subunit.

It is found in the plastid. It localises to the chloroplast. The polypeptide is Small ribosomal subunit protein uS10c (RPS10) (Mesembryanthemum crystallinum (Common ice plant)).